The following is a 383-amino-acid chain: Succinyl-diaminopimelate desuccinylase (383 aa).

A Zn(2+)-binding site is contributed by His79. Asp81 is an active-site residue. Asp110 contributes to the Zn(2+) binding site. The Proton acceptor role is filled by Glu141. 3 residues coordinate Zn(2+): Glu142, Glu170, and His355.

It belongs to the peptidase M20A family. DapE subfamily. As to quaternary structure, homodimer. It depends on Zn(2+) as a cofactor. The cofactor is Co(2+).

It carries out the reaction N-succinyl-(2S,6S)-2,6-diaminopimelate + H2O = (2S,6S)-2,6-diaminopimelate + succinate. Its pathway is amino-acid biosynthesis; L-lysine biosynthesis via DAP pathway; LL-2,6-diaminopimelate from (S)-tetrahydrodipicolinate (succinylase route): step 3/3. Functionally, catalyzes the hydrolysis of N-succinyl-L,L-diaminopimelic acid (SDAP), forming succinate and LL-2,6-diaminopimelate (DAP), an intermediate involved in the bacterial biosynthesis of lysine and meso-diaminopimelic acid, an essential component of bacterial cell walls. This chain is Succinyl-diaminopimelate desuccinylase, found in Helicobacter pylori (strain HPAG1).